The chain runs to 207 residues: 2,3-bisphosphoglycerate-dependent phosphoglycerate mutase (207 aa).

Substrate-binding positions include 10-17, 23-24, R62, 89-92, K100, 116-117, and 160-161; these read RHGQSEWN, TG, ERDY, RR, and GN. H11 acts as the Tele-phosphohistidine intermediate in catalysis. Catalysis depends on E89, which acts as the Proton donor/acceptor.

This sequence belongs to the phosphoglycerate mutase family. BPG-dependent PGAM subfamily. As to quaternary structure, homodimer.

The enzyme catalyses (2R)-2-phosphoglycerate = (2R)-3-phosphoglycerate. It participates in carbohydrate degradation; glycolysis; pyruvate from D-glyceraldehyde 3-phosphate: step 3/5. In terms of biological role, catalyzes the interconversion of 2-phosphoglycerate and 3-phosphoglycerate. The sequence is that of 2,3-bisphosphoglycerate-dependent phosphoglycerate mutase from Bradyrhizobium sp. (strain BTAi1 / ATCC BAA-1182).